Consider the following 837-residue polypeptide: Tuftelin-interacting protein 11 (837 aa).

2 stretches are compositionally biased toward basic and acidic residues: residues 1–13 (MSLS…GEGR) and 53–64 (VWAERDSDDERP). 3 disordered regions span residues 1 to 21 (MSLS…DDER), 53 to 72 (VWAE…KRAR), and 85 to 133 (LKKG…KGFA). The interval 1 to 50 (MSLSHLYRDGEGRIDDDDDERENFEITDWDLQNEFNPNRQRHWQTKEEAT) is required for interaction with DHX15. Phosphoserine is present on residues Ser2, Ser59, and Ser98. Over residues 91–102 (EEAELEDSDDEE) the composition is skewed to acidic residues. Residues 103-116 (KPVKQDDFPKDFGP) show a composition bias toward basic and acidic residues. Position 144 is a phosphoserine (Ser144). Residues 149–195 (TKGIGQKLLQKMGYVPGRGLGKNAQGIINPIEAKQRKGKGAVGAYGS) form the G-patch domain. Residues 179–236 (IEAKQRKGKGAVGAYGSERTTQSMQDFPVVDSEEEAEEEFQKELSQWRKDPSGSKKKP) are disordered. Ser210 is modified (phosphoserine). Residues 217 to 231 (EFQKELSQWRKDPSG) show a composition bias toward basic and acidic residues. The Nuclear localization signal signature appears at 700 to 705 (VKDKFN). Residues 710-734 (IMNRAVSSNVGAYMQPGARENIAYL) form a required for nuclear speckle localization region.

This sequence belongs to the TFP11/STIP family. In terms of assembly, identified in the spliceosome C complex. Found in the Intron Large (IL) complex, a post-mRNA release spliceosomal complex containing the excised intron, U2, U5 and U6 snRNPs, and splicing factors. Interacts with TUFT1. Interacts with DHX15; indicative for a recruitment of DHX15 to the IL complex. Interacts with GCFC2.

Its subcellular location is the cytoplasm. It is found in the nucleus. Its function is as follows. Involved in pre-mRNA splicing, specifically in spliceosome disassembly during late-stage splicing events. Intron turnover seems to proceed through reactions in two lariat-intron associated complexes termed Intron Large (IL) and Intron Small (IS). In cooperation with DHX15 seems to mediate the transition of the U2, U5 and U6 snRNP-containing IL complex to the snRNP-free IS complex leading to efficient debranching and turnover of excised introns. May play a role in the differentiation of ameloblasts and odontoblasts or in the forming of the enamel extracellular matrix. The protein is Tuftelin-interacting protein 11 (TFIP11) of Homo sapiens (Human).